A 177-amino-acid chain; its full sequence is ATP synthase subunit delta (177 aa).

This sequence belongs to the ATPase delta chain family. In terms of assembly, F-type ATPases have 2 components, F(1) - the catalytic core - and F(0) - the membrane proton channel. F(1) has five subunits: alpha(3), beta(3), gamma(1), delta(1), epsilon(1). F(0) has three main subunits: a(1), b(2) and c(10-14). The alpha and beta chains form an alternating ring which encloses part of the gamma chain. F(1) is attached to F(0) by a central stalk formed by the gamma and epsilon chains, while a peripheral stalk is formed by the delta and b chains.

It is found in the cell inner membrane. In terms of biological role, f(1)F(0) ATP synthase produces ATP from ADP in the presence of a proton or sodium gradient. F-type ATPases consist of two structural domains, F(1) containing the extramembraneous catalytic core and F(0) containing the membrane proton channel, linked together by a central stalk and a peripheral stalk. During catalysis, ATP synthesis in the catalytic domain of F(1) is coupled via a rotary mechanism of the central stalk subunits to proton translocation. This protein is part of the stalk that links CF(0) to CF(1). It either transmits conformational changes from CF(0) to CF(1) or is implicated in proton conduction. The protein is ATP synthase subunit delta of Haemophilus ducreyi (strain 35000HP / ATCC 700724).